The sequence spans 166 residues: Regulatory protein RecX (166 aa).

This sequence belongs to the RecX family.

Its subcellular location is the cytoplasm. Its function is as follows. Modulates RecA activity. In Shigella dysenteriae serotype 1 (strain Sd197), this protein is Regulatory protein RecX.